A 226-amino-acid chain; its full sequence is MEKLTIGVLSLQGNFQSHINHFLQLQNPSLKVIEVRNKTNLRECDGIVIPGGESTTLRKCMSYDNDSLYNALKNYIHVKKKPVWGTCAGCILLSEKVEKNKDDNIENEYGNDFSLGGLDIEITRNYYGSQNDSFICSLDIKSQDPIFKKNIRAPCIRAPFIKKISSDKVVTIATFSHESFGKNIIGAVEQDNCMGTIFHPELMPYTCFHDYFLEKVKKHIKDSREA.

52 to 54 (GES) lines the L-glutamine pocket. Cysteine 87 (nucleophile) is an active-site residue. Residues arginine 124 and 156–157 (IR) contribute to the L-glutamine site. Residues histidine 199 and glutamate 201 each act as charge relay system in the active site.

This sequence belongs to the glutaminase PdxT/SNO family. In terms of assembly, in the presence of PdxS, forms a dodecamer of heterodimers. Only shows activity in the heterodimer.

The catalysed reaction is aldehydo-D-ribose 5-phosphate + D-glyceraldehyde 3-phosphate + L-glutamine = pyridoxal 5'-phosphate + L-glutamate + phosphate + 3 H2O + H(+). The enzyme catalyses L-glutamine + H2O = L-glutamate + NH4(+). Its pathway is cofactor biosynthesis; pyridoxal 5'-phosphate biosynthesis. In terms of biological role, catalyzes the hydrolysis of glutamine to glutamate and ammonia as part of the biosynthesis of pyridoxal 5'-phosphate. The resulting ammonia molecule is channeled to the active site of PdxS. The sequence is that of Pyridoxal 5'-phosphate synthase subunit Pdx2 from Plasmodium berghei.